The sequence spans 901 residues: Envelope glycoprotein B (901 aa).

Residues 1–34 form the signal peptide; it reads MRPVRGIARSRILSCSWRGTWTSALTILYLGVYC. Residues 35 to 736 are Virion surface-facing; that stretch reads ESTTVTPTTV…GALVTFVTNP (702 aa). 3 N-linked (GlcNAc...) asparagine; by host glycosylation sites follow: N53, N60, and N66. 4 disulfides stabilise this stretch: C84/C533, C101/C489, C174/C239, and C331/C380. Residues 141-147 are involved in fusion and/or binding to host membrane; the sequence is SYKYVTY. Residue N197 is glycosylated (N-linked (GlcNAc...) asparagine; by host). The segment at 226-233 is involved in fusion and/or binding to host membrane; it reads GSVWLYKE. N270, N289, N328, N372, N398, N406, N436, N537, N571, and N623 each carry an N-linked (GlcNAc...) asparagine; by host glycan. C559 and C596 are disulfide-bonded. Hydrophobic membrane proximal region regions lie at residues 683-734 and 714-734; these read VERV…TFVT and AVGAVGGAIGSFIGALVTFVT. Residues 737–757 traverse the membrane as a helical segment; the sequence is FGAFVVFLFCVGCITLVITVY. The Intravirion segment spans residues 758–901; it reads RRQRRAMQRP…KLNTEDDVHV (144 aa). 2 disordered regions span residues 794 to 813 and 852 to 901; these read GPEGTSGDAPPPYPGEAPYG and DDKK…DVHV. Composition is skewed to basic and acidic residues over residues 852–864 and 872–883; these read DDKKRQEIEKSSK and SETRRRPGIMDR. The Internalization motif signature appears at 890–893; the sequence is YQKL.

It belongs to the herpesviridae glycoprotein B family. As to quaternary structure, homotrimer; disulfide-linked. Binds to heparan sulfate proteoglycans. Interacts with gH/gL heterodimer. In terms of processing, a proteolytic cleavage by host furin generates two subunits that remain linked by disulfide bonds.

The protein resides in the virion membrane. The protein localises to the host cell membrane. It is found in the host endosome membrane. It localises to the host Golgi apparatus membrane. In terms of biological role, envelope glycoprotein that forms spikes at the surface of virion envelope. Essential for the initial attachment to heparan sulfate moieties of the host cell surface proteoglycans. Involved in fusion of viral and cellular membranes leading to virus entry into the host cell. Following initial binding to its host receptors, membrane fusion is mediated by the fusion machinery composed at least of gB and the heterodimer gH/gL. May be involved in the fusion between the virion envelope and the outer nuclear membrane during virion egress. In Guinea pig cytomegalovirus (strain 22122) (GPCMV), this protein is Envelope glycoprotein B.